The following is a 106-amino-acid chain: Cell cycle protein GpsB (106 aa).

Positions 34–67 form a coiled coil; it reads LDVIIQDYDNFKQEIDRLKAENEKLKKSTPAVEQ. The tract at residues 55–83 is disordered; it reads NEKLKKSTPAVEQSRSRSQQPPTSQVNYD. The span at 70–79 shows a compositional bias: low complexity; the sequence is SRSQQPPTSQ.

It belongs to the GpsB family. Forms polymers through the coiled coil domains. Interacts with PBP1, MreC and EzrA.

It localises to the cytoplasm. Functionally, divisome component that associates with the complex late in its assembly, after the Z-ring is formed, and is dependent on DivIC and PBP2B for its recruitment to the divisome. Together with EzrA, is a key component of the system that regulates PBP1 localization during cell cycle progression. Its main role could be the removal of PBP1 from the cell pole after pole maturation is completed. Also contributes to the recruitment of PBP1 to the division complex. Not essential for septum formation. This chain is Cell cycle protein GpsB, found in Oceanobacillus iheyensis (strain DSM 14371 / CIP 107618 / JCM 11309 / KCTC 3954 / HTE831).